An 84-amino-acid polypeptide reads, in one-letter code: Putative pelota-like protein YCL001W-B (84 aa).

This sequence belongs to the eukaryotic release factor 1 family. Pelota subfamily. Highly divergent.

The protein is Putative pelota-like protein YCL001W-B of Saccharomyces cerevisiae (strain ATCC 204508 / S288c) (Baker's yeast).